Consider the following 68-residue polypeptide: MPQLNTAVWPTTITPMLLTLFLITQLKMLNSNYHLPPSPKPMKMKNYNKPWEPKWTKICSLHSLPPQS.

A helical membrane pass occupies residues 8-24; it reads VWPTTITPMLLTLFLIT. Lysine 54 is subject to N6-acetyllysine; alternate. N6-succinyllysine; alternate is present on lysine 54. The residue at position 57 (lysine 57) is an N6-acetyllysine.

Belongs to the ATPase protein 8 family. Component of the ATP synthase complex composed at least of ATP5F1A/subunit alpha, ATP5F1B/subunit beta, ATP5MC1/subunit c (homooctomer), MT-ATP6/subunit a, MT-ATP8/subunit 8, ATP5ME/subunit e, ATP5MF/subunit f, ATP5MG/subunit g, ATP5MK/subunit k, ATP5MJ/subunit j, ATP5F1C/subunit gamma, ATP5F1D/subunit delta, ATP5F1E/subunit epsilon, ATP5PF/subunit F6, ATP5PB/subunit b, ATP5PD/subunit d, ATP5PO/subunit OSCP. ATP synthase complex consists of a soluble F(1) head domain (subunits alpha(3) and beta(3)) - the catalytic core - and a membrane F(0) domain - the membrane proton channel (subunits c, a, 8, e, f, g, k and j). These two domains are linked by a central stalk (subunits gamma, delta, and epsilon) rotating inside the F1 region and a stationary peripheral stalk (subunits F6, b, d, and OSCP). Interacts with PRICKLE3.

It is found in the mitochondrion membrane. In terms of biological role, subunit 8, of the mitochondrial membrane ATP synthase complex (F(1)F(0) ATP synthase or Complex V) that produces ATP from ADP in the presence of a proton gradient across the membrane which is generated by electron transport complexes of the respiratory chain. ATP synthase complex consist of a soluble F(1) head domain - the catalytic core - and a membrane F(1) domain - the membrane proton channel. These two domains are linked by a central stalk rotating inside the F(1) region and a stationary peripheral stalk. During catalysis, ATP synthesis in the catalytic domain of F(1) is coupled via a rotary mechanism of the central stalk subunits to proton translocation. In vivo, can only synthesize ATP although its ATP hydrolase activity can be activated artificially in vitro. Part of the complex F(0) domain. The protein is ATP synthase F(0) complex subunit 8 of Pan paniscus (Pygmy chimpanzee).